A 344-amino-acid polypeptide reads, in one-letter code: Dihydroorotase (344 aa).

Zn(2+)-binding residues include His13 and His15. Substrate is bound by residues 15-17 (HFR) and Asn41. Residues Lys98, His135, and His173 each contribute to the Zn(2+) site. At Lys98 the chain carries N6-carboxylysine. His135 serves as a coordination point for substrate. Leu218 is a substrate binding site. Asp246 is a binding site for Zn(2+). Asp246 is an active-site residue. Residues His250 and Ala262 each contribute to the substrate site.

Belongs to the metallo-dependent hydrolases superfamily. DHOase family. Class II DHOase subfamily. As to quaternary structure, homodimer. It depends on Zn(2+) as a cofactor.

The enzyme catalyses (S)-dihydroorotate + H2O = N-carbamoyl-L-aspartate + H(+). Its pathway is pyrimidine metabolism; UMP biosynthesis via de novo pathway; (S)-dihydroorotate from bicarbonate: step 3/3. Functionally, catalyzes the reversible cyclization of carbamoyl aspartate to dihydroorotate. The protein is Dihydroorotase of Shewanella sediminis (strain HAW-EB3).